The following is a 93-amino-acid chain: Histone H2B (93 aa).

Residues 1-12 (MPEPAKSAPAPK) are compositionally biased toward low complexity. The disordered stretch occupies residues 1 to 31 (MPEPAKSAPAPKKGSKKAVTKTQKKGDKKRX). Residues Lys6 and Lys13 each carry the N6-acetyllysine modification. Residues 13 to 28 (KGSKKAVTKTQKKGDK) show a composition bias toward basic residues. Position 15 is a phosphoserine (Ser15). Residues Lys16 and Lys21 each carry the N6-acetyllysine modification.

The protein belongs to the histone H2B family. The nucleosome is a histone octamer containing two molecules each of H2A, H2B, H3 and H4 assembled in one H3-H4 heterotetramer and two H2A-H2B heterodimers. The octamer wraps approximately 147 bp of DNA. Post-translationally, monoubiquitination at the C-terminal Lys gives a specific tag for epigenetic transcriptional activation and is also prerequisite for histone H3 'Lys-4' and 'Lys-79' methylation. In terms of processing, phosphorylated on Ser-15 during apoptosis; which facilitates apoptotic chromatin condensation.

Its subcellular location is the nucleus. The protein localises to the chromosome. In terms of biological role, core component of nucleosome. Nucleosomes wrap and compact DNA into chromatin, limiting DNA accessibility to the cellular machineries which require DNA as a template. Histones thereby play a central role in transcription regulation, DNA repair, DNA replication and chromosomal stability. DNA accessibility is regulated via a complex set of post-translational modifications of histones, also called histone code, and nucleosome remodeling. The polypeptide is Histone H2B (Crocodylus niloticus (Nile crocodile)).